Here is a 568-residue protein sequence, read N- to C-terminus: Potassium-transporting ATPase potassium-binding subunit (568 aa).

Transmembrane regions (helical) follow at residues 1–21 (MWLT…LAVP), 60–80 (GLAL…LLRA), 129–149 (AITF…AGFI), 174–194 (VMLP…VPQA), 251–271 (IHIL…GSML), 278–298 (WVLF…VFTA), 381–401 (VGLI…GMMI), 420–440 (VMLA…LAAV), 488–508 (IGLA…ALAG), and 528–548 (PLFM…TFLP).

The protein belongs to the KdpA family. In terms of assembly, the system is composed of three essential subunits: KdpA, KdpB and KdpC.

The protein resides in the cell inner membrane. Part of the high-affinity ATP-driven potassium transport (or Kdp) system, which catalyzes the hydrolysis of ATP coupled with the electrogenic transport of potassium into the cytoplasm. This subunit binds the periplasmic potassium ions and delivers the ions to the membrane domain of KdpB through an intramembrane tunnel. This is Potassium-transporting ATPase potassium-binding subunit from Delftia acidovorans (strain DSM 14801 / SPH-1).